A 64-amino-acid chain; its full sequence is MPKMKSHRGACKRFKVTGSGKVKREKMNASHILEKKSRKRKRNLHQSTLVDASQEKTVKRMILA.

Belongs to the bacterial ribosomal protein bL35 family.

The protein is Large ribosomal subunit protein bL35 of Chloroherpeton thalassium (strain ATCC 35110 / GB-78).